The following is a 157-amino-acid chain: Protein MG115 homolog (157 aa).

This sequence belongs to the CinA family.

The polypeptide is Protein MG115 homolog (Mycoplasma pneumoniae (strain ATCC 29342 / M129 / Subtype 1) (Mycoplasmoides pneumoniae)).